The following is a 124-amino-acid chain: Fluoride-specific ion channel FluC 1 (124 aa).

The next 4 membrane-spanning stretches (helical) occupy residues A7–V27, F35–G55, L63–L83, and I101–W121.

It belongs to the fluoride channel Fluc/FEX (TC 1.A.43) family.

Its subcellular location is the cell membrane. The catalysed reaction is fluoride(in) = fluoride(out). Functionally, fluoride-specific ion channel. Important for reducing fluoride concentration in the cell, thus reducing its toxicity. The protein is Fluoride-specific ion channel FluC 1 of Rubrobacter xylanophilus (strain DSM 9941 / JCM 11954 / NBRC 16129 / PRD-1).